We begin with the raw amino-acid sequence, 150 residues long: MDFINQTLFSKYTESNVDTIPYLLGLILALTNGSRILRFINSFIIICKHIVTTSKSAIDKMRKINNSEHNTKNAHEEYEEVMKQIREMRIHMTALFNSLHDDNVKWRMSESIRREKKHEMKMSDNRNEFKHSHNDTNICEKSGLETEVCL.

Residues 1–15 (MDFINQTLFSKYTES) lie on the Lumenal side of the membrane. Residue Asn-5 is glycosylated (N-linked (GlcNAc...) asparagine; by host). A helical; Signal-anchor for type III membrane protein membrane pass occupies residues 16–44 (NVDTIPYLLGLILALTNGSRILRFINSFI). Topologically, residues 45 to 150 (IICKHIVTTS…KSGLETEVCL (106 aa)) are cytoplasmic.

The protein belongs to the rotavirus NSP4 family. Homotetramer. Interacts with the immature particle in the viroplasm. Interacts with host CAV1, early and late in infection. Interacts with host integrin ITGA1/ITGB1 heterodimer. Interacts with host integrin ITGA2/ITGB1 heterodimer. Interaction with microtubules blocks trafficking to the Golgi apparatus. Post-translationally, the N-glycosyl content is primarily Man(9)GlcNAc, with a small amount of Man(8)GlcNAc.

It is found in the host rough endoplasmic reticulum membrane. Its subcellular location is the host membrane. The protein localises to the host caveola. It localises to the secreted. Functionally, plays an essential role in the virus replication cycle by acting as a viroporin. Creates a pore in the host endoplasmic reticulum and as a consequence releases Ca(2+) in the cytoplasm of infected cell. In turn, high levels of cytoplasmic calcium trigger membrane trafficking and transport of viral ER-associated proteins to viroplasms, sites of viral genome replication and immature particle assembly. In terms of biological role, the secreted form acts as an enterotoxin that causes phospholipase C-dependent elevation of the intracellular calcium concentration in host intestinal mucosa cells. Increased concentration of intracellular calcium disrupts the cytoskeleton and the tight junctions, raising the paracellular permeability. Potentiates chloride ion secretion through a calcium ion-dependent signaling pathway, inducing age-dependent diarrhea. To perform this enterotoxigenic role in vivo, NSP4 is released from infected enterocytes in a soluble form capable of diffusing within the intestinal lumen and interacting with host plasma membrane receptors on neighboring epithelial cells such as integrins ITGA1/ITGB1 and ITGA2/ITGB1. The chain is Non-structural glycoprotein 4 from Homo sapiens (Human).